A 306-amino-acid polypeptide reads, in one-letter code: ATP synthase gamma chain (306 aa).

Belongs to the ATPase gamma chain family. In terms of assembly, F-type ATPases have 2 components, CF(1) - the catalytic core - and CF(0) - the membrane proton channel. CF(1) has five subunits: alpha(3), beta(3), gamma(1), delta(1), epsilon(1). CF(0) has three main subunits: a, b and c.

It localises to the cell membrane. Its function is as follows. Produces ATP from ADP in the presence of a proton gradient across the membrane. The gamma chain is believed to be important in regulating ATPase activity and the flow of protons through the CF(0) complex. In Bifidobacterium adolescentis (strain ATCC 15703 / DSM 20083 / NCTC 11814 / E194a), this protein is ATP synthase gamma chain.